Here is a 313-residue protein sequence, read N- to C-terminus: Alpha-S1-casein (313 aa).

A signal peptide spans 1 to 15 (MKLLILTCLVAAAFA). A compositionally biased stretch (low complexity) spans 77–96 (ASEEQAMASAQEDSSISSSS). The disordered stretch occupies residues 77–111 (ASEEQAMASAQEDSSISSSSEESEEAIPNITEQKN). A phosphoserine mark is found at Ser-90, Ser-91, Ser-93, Ser-94, Ser-95, and Ser-96. 15 repeat units span residues 135-140 (LLQKAS), 141-146 (LAKQAS), 147-152 (LFQQPS), 153-158 (LVQQAS), 159-164 (LFQQPS), 165-170 (LLQQAS), 171-176 (LFQQPS), 177-182 (MAQQAS), 183-188 (LLQQLL), 189-194 (LAQQPS), 195-200 (LALQVS), 201-206 (PAQQSS), 207-212 (LVQQAF), 213-218 (LAQQAS), and 219-224 (LAQKHH). The 15 X 6 AA tandem repeats stretch occupies residues 135–224 (LLQKASLAKQ…QQASLAQKHH (90 aa)).

This sequence belongs to the alpha-casein family. Mammary gland specific. Secreted in milk.

The protein resides in the secreted. In terms of biological role, important role in the capacity of milk to transport calcium phosphate. The polypeptide is Alpha-S1-casein (Csn1s1) (Mus musculus (Mouse)).